Consider the following 398-residue polypeptide: Metalloprotease MmpA (398 aa).

His-22 contacts Zn(2+). Glu-23 is a catalytic residue. Position 26 (His-26) interacts with Zn(2+). 3 consecutive transmembrane segments (helical) span residues 117-139, 316-338, and 362-381; these read FIAV…VILV, QFWL…IPVL, and AAGF…FAAW. A PDZ domain is found at 130 to 203; sequence AILVFAVILV…MPIDFAVERD (74 aa).

This sequence belongs to the peptidase M50B family. It depends on Zn(2+) as a cofactor.

The protein resides in the cell inner membrane. Its function is as follows. Involved in the regulated intramembrane proteolysis (RIP) of the short isoform of PodJ protein (PodJS), during the swarmer-to-stalked transition. The cleavage occurs near or within the single transmembrane of PodJS thereby releasing the N-terminal segment into the cytoplasm for subsequent degradation. It contributes to preserve asymmetry in the next cell cycle through sequential degradation. The sequence is that of Metalloprotease MmpA (mmpA) from Caulobacter vibrioides (strain ATCC 19089 / CIP 103742 / CB 15) (Caulobacter crescentus).